We begin with the raw amino-acid sequence, 169 residues long: Photosystem I assembly protein Ycf3 (169 aa).

TPR repeat units lie at residues 35-68 (AFTY…ETDP), 72-105 (SYIL…NPSL), and 120-153 (GEQA…APGN).

This sequence belongs to the Ycf3 family.

The protein resides in the plastid. It localises to the chloroplast thylakoid membrane. Essential for the assembly of the photosystem I (PSI) complex. May act as a chaperone-like factor to guide the assembly of the PSI subunits. This Pinus koraiensis (Korean pine) protein is Photosystem I assembly protein Ycf3.